A 109-amino-acid polypeptide reads, in one-letter code: Mannose-specific lectin (109 aa).

The Bulb-type lectin domain occupies 25–109; sequence MQEDCNLVLY…ARWATGTNIH (85 aa). Positions 26, 28, 30, 34, 37, 38, 41, 42, 44, 57, 59, 61, 65, 72, 73, 76, 83, 89, 91, 93, 97, and 102 each coordinate alpha-D-mannopyranose. Residues Cys-29 and Cys-52 are joined by a disulfide bond.

Homotetramer; antiparallel. As to expression, detected in bulbs (at protein level).

The protein localises to the secreted. Its activity is regulated as follows. Strongly inhibited by alpha-1,6-linked mannotriose. Inhibited by various oligosaccharides of P.pastoris mannan including, Man(alpha-l,6)Man-alpha-O-Me, Man(alpha-l,2)Man, Man(alpha-l,3)Man-alpha-O-Me, Man(alpha-l,2)Man, alpha-1,2-linked mannotriose, and Man(alpha-1,6)Glc, in order of decreasing potency. Weakly inhibited by elsinotetraose. Not inhibited by maltose or nigerose. In terms of biological role, D-mannose-binding lectin which binds alpha-D-linked mannose. Displays a high affinity for alpha-(1-6)-mannose oligomers. Able to interact with both terminal and internal alpha-D-mannosyl residues. Displays antiviral activity and therefore may contribute to defense against infections. The sequence is that of Mannose-specific lectin from Narcissus pseudonarcissus (Daffodil).